The chain runs to 1385 residues: PsbD mRNA maturation factor Nac2, chloroplastic (1385 aa).

The N-terminal 45 residues, 1–45 (MGALPCPAHIEHHQGLSSFGTRRVLRQSVACGAHRSRRRSLWAGA), are a transit peptide targeting the chloroplast. A compositionally biased stretch (low complexity) spans 132–152 (GPHGAASATGAGSHSSSAGAP). 7 disordered regions span residues 132–157 (GPHGAASATGAGSHSSSAGAPTPTPR), 263–282 (AVAAAAGRQPHEHQQERSSA), 304–360 (TSSR…AAGP), 387–502 (RQQP…GHGQ), 546–568 (NGAGMSDPASASSTSTSSNSGTS), 726–756 (HADSSSSNGNGSGSSSSSGLPQVSEEEVAAA), and 840–899 (ARRA…APSA). Residues 271 to 281 (QPHEHQQERSS) are compositionally biased toward basic and acidic residues. Low complexity predominate over residues 304-313 (TSSRRGGRSS). The segment covering 403-412 (NGSGKSGSGG) has biased composition (gly residues). Composition is skewed to low complexity over residues 448-464 (APAAKRSAAGKASRPAA), 554-568 (ASASSTSTSSNSGTS), 729-744 (SSSSNGNGSGSSSSSG), and 854-893 (ASTTASMDGDDGALSVADGSSSADAAIDPASGASPSAAAG). 9 TPR repeats span residues 851–884 (RRGASTTASMDGDDGALSVADGSSSADAAIDPAS), 951–984 (GAVMHYWGSRELEAGNVRNARIVAAEALRKCPAD), 985–1018 (VALYVLAASVELEASNLELAKGYCQRAYALDRTD), 1019–1052 (KQLFLIWPRVEAGLGDRDKARLLFERALDAHPLN), 1053–1086 (TKIINMYARFEAEEGSYREAAELYDRALQIDPLS), 1091–1124 (VHNRADWASMETDLGNTGLARQLLEEGLEAHPNS), 1125–1158 (AALLVVYSKLQRLEGRYQEALAAVRRAQAVAGAF), 1160–1193 (AAVMNERAQVLRALGERELAANLSRHVSAVKQLN), and 1205–1238 (AWRAFVEATRTPEQRTLVAAARAHRLQLGWAPAV). Disordered regions lie at residues 1237–1257 (AVRGAKPGPPPGVVAGDGRRP) and 1333–1385 (IQDP…ADDM). The span at 1356-1365 (QDADYYEEPE) shows a compositional bias: acidic residues. Basic and acidic residues predominate over residues 1374–1385 (AVRRPMPDADDM).

Part of 2 complexes of about 600 and less than 2000 kDa, both of which also contain non-polysomal RNA.

The protein resides in the plastid. The protein localises to the chloroplast stroma. In terms of biological role, involved, directly or indirectly, in the processing of the chloroplast encoded psbD mRNA to its mature form, acting via the 5'-UTR of the psbD mRNA. The last 588 amino acids of the protein are sufficient to confer stability on the transcript in vivo. The chain is PsbD mRNA maturation factor Nac2, chloroplastic (NAC2) from Chlamydomonas reinhardtii (Chlamydomonas smithii).